The sequence spans 240 residues: MVRIDKRSNTDLRPVKITRKYLKYPLGSVLIEMGETKVICTVSMEEKVPPFLKGTNQGWLTAEYGMLPGSTPERKVRDVVKGAINGRSQEIQRLIGRSLRAVVDFSKLGERTIWIDADVIQADGGTRTAAITGAFVALYDALEKLKREGIIKEIPIREFVAAVSVGIVDGEILLDLSANEDMRAEVDMNVVMTESGKFVEIQGTAEKTPFTHEQLQHMLNLAKQGIMRLIEIQKKTLGLL.

Phosphate is bound by residues R87 and 125 to 127 (GTR).

This sequence belongs to the RNase PH family. Homohexameric ring arranged as a trimer of dimers.

It catalyses the reaction tRNA(n+1) + phosphate = tRNA(n) + a ribonucleoside 5'-diphosphate. In terms of biological role, phosphorolytic 3'-5' exoribonuclease that plays an important role in tRNA 3'-end maturation. Removes nucleotide residues following the 3'-CCA terminus of tRNAs; can also add nucleotides to the ends of RNA molecules by using nucleoside diphosphates as substrates, but this may not be physiologically important. Probably plays a role in initiation of 16S rRNA degradation (leading to ribosome degradation) during starvation. This is Ribonuclease PH from Dictyoglomus turgidum (strain DSM 6724 / Z-1310).